Here is a 405-residue protein sequence, read N- to C-terminus: S-arrestin (405 aa).

At Thr-234 the chain carries Phosphothreonine.

Belongs to the arrestin family. As to quaternary structure, monomer. Homodimer. Homotetramer. Interacts with RHO (via the phosphorylated C-terminus). As to expression, detected in retina, in the proximal portion of the outer segment of rod photoreceptor cells (at protein level).

It is found in the cell projection. Its subcellular location is the cilium. It localises to the photoreceptor outer segment. The protein localises to the membrane. In terms of biological role, binds to photoactivated, phosphorylated RHO and terminates RHO signaling via G-proteins by competing with G-proteins for the same binding site on RHO. May play a role in preventing light-dependent degeneration of retinal photoreceptor cells. In Homo sapiens (Human), this protein is S-arrestin (SAG).